We begin with the raw amino-acid sequence, 126 residues long: Protein MGF 100-1R (126 aa).

It belongs to the asfivirus MGF 100 family.

Functionally, plays a role in virus cell tropism, and may be required for efficient virus replication in macrophages. The chain is Protein MGF 100-1R from Ornithodoros (relapsing fever ticks).